The sequence spans 91 residues: Small ribosomal subunit protein bS16 (91 aa).

It belongs to the bacterial ribosomal protein bS16 family.

This Exiguobacterium sibiricum (strain DSM 17290 / CCUG 55495 / CIP 109462 / JCM 13490 / 255-15) protein is Small ribosomal subunit protein bS16.